The following is a 171-amino-acid chain: uncharacterized protein (171 aa).

Residues 139-171 are disordered; the sequence is ARKPTKSDDEEEEVGKMGGISSSINSWVQRQKL. The segment covering 158 to 171 has biased composition (polar residues); sequence ISSSINSWVQRQKL.

This is an uncharacterized protein from Caenorhabditis elegans.